Consider the following 525-residue polypeptide: Bifunctional purine biosynthesis protein PurH (525 aa).

The MGS-like domain maps to 1–149; sequence MSDPVIKRAL…KNNESVTVVT (149 aa).

Belongs to the PurH family.

The enzyme catalyses (6R)-10-formyltetrahydrofolate + 5-amino-1-(5-phospho-beta-D-ribosyl)imidazole-4-carboxamide = 5-formamido-1-(5-phospho-D-ribosyl)imidazole-4-carboxamide + (6S)-5,6,7,8-tetrahydrofolate. The catalysed reaction is IMP + H2O = 5-formamido-1-(5-phospho-D-ribosyl)imidazole-4-carboxamide. The protein operates within purine metabolism; IMP biosynthesis via de novo pathway; 5-formamido-1-(5-phospho-D-ribosyl)imidazole-4-carboxamide from 5-amino-1-(5-phospho-D-ribosyl)imidazole-4-carboxamide (10-formyl THF route): step 1/1. It participates in purine metabolism; IMP biosynthesis via de novo pathway; IMP from 5-formamido-1-(5-phospho-D-ribosyl)imidazole-4-carboxamide: step 1/1. This is Bifunctional purine biosynthesis protein PurH from Pelodictyon phaeoclathratiforme (strain DSM 5477 / BU-1).